A 385-amino-acid polypeptide reads, in one-letter code: Spermidine/putrescine import ATP-binding protein PotA (385 aa).

In terms of domain architecture, ABC transporter spans 6–238 (IEFKNVSKVF…PINHFVATFI (233 aa)). 40 to 47 (GSSGSGKS) provides a ligand contact to ATP.

This sequence belongs to the ABC transporter superfamily. Spermidine/putrescine importer (TC 3.A.1.11.1) family. As to quaternary structure, the complex is composed of two ATP-binding proteins (PotA), two transmembrane proteins (PotB and PotC) and a solute-binding protein (PotD).

It is found in the cell membrane. It carries out the reaction ATP + H2O + polyamine-[polyamine-binding protein]Side 1 = ADP + phosphate + polyamineSide 2 + [polyamine-binding protein]Side 1.. Part of the ABC transporter complex PotABCD involved in spermidine/putrescine import. Responsible for energy coupling to the transport system. The chain is Spermidine/putrescine import ATP-binding protein PotA from Streptococcus sanguinis (strain SK36).